We begin with the raw amino-acid sequence, 160 residues long: Nucleotide-binding protein VFMJ11_1323 (160 aa).

The protein belongs to the YajQ family.

In terms of biological role, nucleotide-binding protein. In Aliivibrio fischeri (strain MJ11) (Vibrio fischeri), this protein is Nucleotide-binding protein VFMJ11_1323.